The following is a 457-amino-acid chain: Siroheme synthase (457 aa).

The segment at methionine 1–threonine 204 is precorrin-2 dehydrogenase /sirohydrochlorin ferrochelatase. NAD(+)-binding positions include aspartate 22 to valine 23 and leucine 43 to threonine 44. Serine 128 carries the phosphoserine modification. The tract at residues glycine 216–histidine 457 is uroporphyrinogen-III C-methyltransferase. An S-adenosyl-L-methionine-binding site is contributed by proline 225. Aspartate 248 serves as the catalytic Proton acceptor. Lysine 270 functions as the Proton donor in the catalytic mechanism. S-adenosyl-L-methionine contacts are provided by residues glycine 301–aspartate 303, isoleucine 306, threonine 331–alanine 332, methionine 382, and glycine 411.

It in the N-terminal section; belongs to the precorrin-2 dehydrogenase / sirohydrochlorin ferrochelatase family. In the C-terminal section; belongs to the precorrin methyltransferase family.

It carries out the reaction uroporphyrinogen III + 2 S-adenosyl-L-methionine = precorrin-2 + 2 S-adenosyl-L-homocysteine + H(+). The enzyme catalyses precorrin-2 + NAD(+) = sirohydrochlorin + NADH + 2 H(+). It catalyses the reaction siroheme + 2 H(+) = sirohydrochlorin + Fe(2+). Its pathway is cofactor biosynthesis; adenosylcobalamin biosynthesis; precorrin-2 from uroporphyrinogen III: step 1/1. The protein operates within cofactor biosynthesis; adenosylcobalamin biosynthesis; sirohydrochlorin from precorrin-2: step 1/1. It functions in the pathway porphyrin-containing compound metabolism; siroheme biosynthesis; precorrin-2 from uroporphyrinogen III: step 1/1. It participates in porphyrin-containing compound metabolism; siroheme biosynthesis; siroheme from sirohydrochlorin: step 1/1. Its pathway is porphyrin-containing compound metabolism; siroheme biosynthesis; sirohydrochlorin from precorrin-2: step 1/1. Functionally, multifunctional enzyme that catalyzes the SAM-dependent methylations of uroporphyrinogen III at position C-2 and C-7 to form precorrin-2 via precorrin-1. Then it catalyzes the NAD-dependent ring dehydrogenation of precorrin-2 to yield sirohydrochlorin. Finally, it catalyzes the ferrochelation of sirohydrochlorin to yield siroheme. The polypeptide is Siroheme synthase (Salmonella schwarzengrund (strain CVM19633)).